We begin with the raw amino-acid sequence, 166 residues long: uncharacterized protein (166 aa).

This is an uncharacterized protein from Invertebrate iridescent virus 6 (IIV-6).